The sequence spans 224 residues: Inner membrane-spanning protein YciB (224 aa).

6 consecutive transmembrane segments (helical) span residues 20–40, 61–81, 86–106, 123–143, 156–176, and 187–207; these read GVNP…FFFA, IFVA…ASWL, LPIM…LTLY, LFGG…GYVF, KLTF…EVVW, and FKVW…MPLI.

This sequence belongs to the YciB family.

It localises to the cell inner membrane. Its function is as follows. Plays a role in cell envelope biogenesis, maintenance of cell envelope integrity and membrane homeostasis. This Mesorhizobium japonicum (strain LMG 29417 / CECT 9101 / MAFF 303099) (Mesorhizobium loti (strain MAFF 303099)) protein is Inner membrane-spanning protein YciB.